We begin with the raw amino-acid sequence, 464 residues long: GDNF family receptor alpha-2 (464 aa).

The signal sequence occupies residues 1-21; the sequence is MILANAFCLFFFLDETLRSLA. 14 disulfide bridges follow: Cys40-Cys93, Cys47-Cys53, Cys63-Cys78, Cys95-Cys105, Cys161-Cys222, Cys168-Cys174, Cys185-Cys200, Cys195-Cys241, Cys224-Cys229, Cys251-Cys323, Cys258-Cys264, Cys275-Cys293, Cys285-Cys347, and Cys325-Cys335. A glycan (N-linked (GlcNAc...) asparagine) is linked at Asn52. Residue Asn357 is glycosylated (N-linked (GlcNAc...) asparagine). Residues 360–374 are compositionally biased toward polar residues; sequence DVNLSPKSPPFQATQ. The disordered stretch occupies residues 360–392; that stretch reads DVNLSPKSPPFQATQAPRVDKTPSLPDDLSDST. The segment covering 381-392 has biased composition (low complexity); it reads TPSLPDDLSDST. Asn413 carries an N-linked (GlcNAc...) asparagine glycan. Residue Asn440 is the site of GPI-anchor amidated asparagine attachment. The propeptide at 441 to 464 is removed in mature form; that stretch reads SGPRRTRPSAALTAASFLMLKLAL.

This sequence belongs to the GDNFR family. Interacts with NRTN ligand and RET: forms a 2:2:2 ternary complex composed of NRTN ligand, GFRA2 and RET receptor. Also forms a 4:4:4 tetrameric complex composed of 4 copies of NRTN ligand, GFRA2 and RET receptor, which prevents endocytosis of RET. Interacts with SORL1.

It localises to the cell membrane. Receptor for neurturin (NRTN), a growth factor that supports the survival of sympathetic neurons. NRTN-binding leads to autophosphorylation and activation of the RET receptor. Also able to mediate GDNF signaling through the RET tyrosine kinase receptor. The chain is GDNF family receptor alpha-2 (GFRA2) from Bos taurus (Bovine).